Consider the following 349-residue polypeptide: tRNA pseudouridine synthase D (349 aa).

Residue Phe27 coordinates substrate. Residue Asp80 is the Nucleophile of the active site. A substrate-binding site is contributed by Asn129. Positions 155–303 constitute a TRUD domain; that stretch reads GVPNYFGAQR…VEAARRAMLL (149 aa). Residue Phe329 participates in substrate binding.

Belongs to the pseudouridine synthase TruD family.

The catalysed reaction is uridine(13) in tRNA = pseudouridine(13) in tRNA. Responsible for synthesis of pseudouridine from uracil-13 in transfer RNAs. This Escherichia coli O9:H4 (strain HS) protein is tRNA pseudouridine synthase D.